Consider the following 122-residue polypeptide: MQRIMLRAKLHRVTVTEADLHYEGSCGIDEDLLDAAGMREFERIELYNVTNGERFDTYIIKAARGSGAISLNGAAARRAQVGDLLIICTYGPMSEEQSATHKPQVVLVDDANRVKEIRKFPA.

Ser25 (schiff-base intermediate with substrate; via pyruvic acid) is an active-site residue. At Ser25 the chain carries Pyruvic acid (Ser). Thr57 serves as a coordination point for substrate. Tyr58 (proton donor) is an active-site residue. 73 to 75 contacts substrate; that stretch reads GAA.

It belongs to the PanD family. Heterooctamer of four alpha and four beta subunits. Pyruvate serves as cofactor. Is synthesized initially as an inactive proenzyme, which is activated by self-cleavage at a specific serine bond to produce a beta-subunit with a hydroxyl group at its C-terminus and an alpha-subunit with a pyruvoyl group at its N-terminus.

It localises to the cytoplasm. It carries out the reaction L-aspartate + H(+) = beta-alanine + CO2. Its pathway is cofactor biosynthesis; (R)-pantothenate biosynthesis; beta-alanine from L-aspartate: step 1/1. Functionally, catalyzes the pyruvoyl-dependent decarboxylation of aspartate to produce beta-alanine. The protein is Aspartate 1-decarboxylase of Bordetella parapertussis (strain 12822 / ATCC BAA-587 / NCTC 13253).